A 105-amino-acid chain; its full sequence is MAINNQRIRIRLKAFDHKLIDISTQEIVDTAKKTGAQVKGPIPLPVRKEKFTILISPHVNKKARDQYEIRTHKRLIDIVEPTDKTVDALMKLDLASGVDVQISLS.

Belongs to the universal ribosomal protein uS10 family. In terms of assembly, part of the 30S ribosomal subunit.

Its function is as follows. Involved in the binding of tRNA to the ribosomes. The sequence is that of Small ribosomal subunit protein uS10 from Francisella philomiragia subsp. philomiragia (strain ATCC 25017 / CCUG 19701 / FSC 153 / O#319-036).